The sequence spans 364 residues: Chorismate synthase (364 aa).

Positions 41–60 (MQHDLDRRRPGTSRYTTARR) are disordered. NADP(+) contacts are provided by Arg-48 and Arg-54. Residues 125-127 (RSS), 238-239 (NA), Gly-278, 293-297 (KPTSS), and Arg-319 each bind FMN.

It belongs to the chorismate synthase family. In terms of assembly, homotetramer. Requires FMNH2 as cofactor.

The catalysed reaction is 5-O-(1-carboxyvinyl)-3-phosphoshikimate = chorismate + phosphate. It participates in metabolic intermediate biosynthesis; chorismate biosynthesis; chorismate from D-erythrose 4-phosphate and phosphoenolpyruvate: step 7/7. In terms of biological role, catalyzes the anti-1,4-elimination of the C-3 phosphate and the C-6 proR hydrogen from 5-enolpyruvylshikimate-3-phosphate (EPSP) to yield chorismate, which is the branch point compound that serves as the starting substrate for the three terminal pathways of aromatic amino acid biosynthesis. This reaction introduces a second double bond into the aromatic ring system. This is Chorismate synthase from Shewanella putrefaciens (strain CN-32 / ATCC BAA-453).